The following is a 725-amino-acid chain: Ribosomal RNA large subunit methyltransferase K/L (725 aa).

Residues 46–157 (VGYRLCLWSR…KGQAVLSLDL (112 aa)) enclose the THUMP domain.

Belongs to the methyltransferase superfamily. RlmKL family.

It is found in the cytoplasm. It catalyses the reaction guanosine(2445) in 23S rRNA + S-adenosyl-L-methionine = N(2)-methylguanosine(2445) in 23S rRNA + S-adenosyl-L-homocysteine + H(+). The enzyme catalyses guanosine(2069) in 23S rRNA + S-adenosyl-L-methionine = N(2)-methylguanosine(2069) in 23S rRNA + S-adenosyl-L-homocysteine + H(+). Functionally, specifically methylates the guanine in position 2445 (m2G2445) and the guanine in position 2069 (m7G2069) of 23S rRNA. In Stutzerimonas stutzeri (strain A1501) (Pseudomonas stutzeri), this protein is Ribosomal RNA large subunit methyltransferase K/L.